The chain runs to 278 residues: Biotin synthase (278 aa).

A Radical SAM core domain is found at 1-227; the sequence is MQIMLCAISN…QSVVMVAGGR (227 aa). [4Fe-4S] cluster-binding residues include Cys16, Cys20, and Cys23. [2Fe-2S] cluster contacts are provided by Cys60, Asn96, and Cys154.

The protein belongs to the radical SAM superfamily. Biotin synthase family. Homodimer. Requires [4Fe-4S] cluster as cofactor. [2Fe-2S] cluster is required as a cofactor.

It catalyses the reaction (4R,5S)-dethiobiotin + (sulfur carrier)-SH + 2 reduced [2Fe-2S]-[ferredoxin] + 2 S-adenosyl-L-methionine = (sulfur carrier)-H + biotin + 2 5'-deoxyadenosine + 2 L-methionine + 2 oxidized [2Fe-2S]-[ferredoxin]. It functions in the pathway cofactor biosynthesis; biotin biosynthesis; biotin from 7,8-diaminononanoate: step 2/2. Its function is as follows. Catalyzes the conversion of dethiobiotin (DTB) to biotin by the insertion of a sulfur atom into dethiobiotin via a radical-based mechanism. This Campylobacter jejuni subsp. jejuni serotype O:2 (strain ATCC 700819 / NCTC 11168) protein is Biotin synthase.